The primary structure comprises 372 residues: Tyrosine--tRNA ligase 1 (372 aa).

5 residues coordinate L-tyrosine: Tyr37, Tyr169, Gln173, Asp176, and Gln191. The short motif at 246 to 250 is the 'KMSKS' region element; the sequence is KMSKS. Lys249 provides a ligand contact to ATP.

This sequence belongs to the class-I aminoacyl-tRNA synthetase family. TyrS type 4 subfamily. In terms of assembly, homodimer.

It is found in the cytoplasm. The enzyme catalyses tRNA(Tyr) + L-tyrosine + ATP = L-tyrosyl-tRNA(Tyr) + AMP + diphosphate + H(+). Its function is as follows. Catalyzes the attachment of tyrosine to tRNA(Tyr) in a two-step reaction: tyrosine is first activated by ATP to form Tyr-AMP and then transferred to the acceptor end of tRNA(Tyr). The polypeptide is Tyrosine--tRNA ligase 1 (Pyrobaculum aerophilum (strain ATCC 51768 / DSM 7523 / JCM 9630 / CIP 104966 / NBRC 100827 / IM2)).